A 560-amino-acid chain; its full sequence is Dimethylaniline monooxygenase [N-oxide-forming] 4 (560 aa).

FAD-binding positions include 9–13, E32, and 40–41; these read GAGVS and LW. Residues 60-61 and 195-198 contribute to the NADP(+) site; these read TN and TGGD. Residues 510–530 traverse the membrane as a helical segment; sequence LSHYLIAWGAPVLLVSLLLIY.

The protein belongs to the FMO family. Requires FAD as cofactor.

It localises to the microsome membrane. The protein resides in the endoplasmic reticulum membrane. It carries out the reaction N,N-dimethylaniline + NADPH + O2 + H(+) = N,N-dimethylaniline N-oxide + NADP(+) + H2O. Its function is as follows. This protein is involved in the oxidative metabolism of a variety of xenobiotics such as drugs and pesticides. The protein is Dimethylaniline monooxygenase [N-oxide-forming] 4 (Fmo4) of Mus musculus (Mouse).